A 626-amino-acid chain; its full sequence is Colicin-Ib (626 aa).

A compositionally biased stretch (polar residues) spans 276–286 (QQLTQQKNTPD). A disordered region spans residues 276 to 308 (QQLTQQKNTPDGKTIVSPEKFPGRSSTNHSIVV). The helical transmembrane segment at 588–612 (FSVMLGTPVGILGFAIIMAAVSALV) threads the bilayer.

Belongs to the channel forming colicin family.

It is found in the host membrane. Functionally, this colicin is a channel-forming colicin. This class of transmembrane toxins depolarize the cytoplasmic membrane, leading to dissipation of cellular energy. Colicins are polypeptide toxins produced by and active against E.coli and closely related bacteria. This Escherichia coli protein is Colicin-Ib (cib).